The primary structure comprises 396 residues: MQNMVILGATGSIGASTLSVISANPLAYSVYGLVANASVDKMLALCVAHKPKVAHMVDEAAAKQLRAVLPATLNIQVTTGMNDLLGLVTAAEVDTVMAAIVGAAGLVPTLEAVKAGKRVLLANKEALVMSGELFIEATKRSGAVLLPVDSEHNAIFQCLPQEVQANLGRCDLAASGISHILLTGSGGPFLRSDLATLAAMTPAQACKHPNWSMGPKISVDSATMMNKGLEFIEARWLFNTQAEQLKVVIHPQSVIHSMVQYRDGSVIAQMGNPDMRTPIAHCMAYPQRIHSGVEPLDFFKVGQLSFYEPDFERFPCLALAMDACAQGQEATTVLNAANEIAVEAFLQGQIGFTQIAKVNEACLVTVPKRPMGSIEDILALDAQTRVYARETLASIA.

Residues T10, G11, S12, I13, and N123 each contribute to the NADPH site. K124 is a 1-deoxy-D-xylulose 5-phosphate binding site. E125 serves as a coordination point for NADPH. D149 lines the Mn(2+) pocket. The 1-deoxy-D-xylulose 5-phosphate site is built by S150, E151, S185, and H208. A Mn(2+)-binding site is contributed by E151. NADPH is bound at residue G214. Residues S221, N226, K227, and E230 each coordinate 1-deoxy-D-xylulose 5-phosphate. Residue E230 participates in Mn(2+) binding.

The protein belongs to the DXR family. Requires Mg(2+) as cofactor. It depends on Mn(2+) as a cofactor.

It carries out the reaction 2-C-methyl-D-erythritol 4-phosphate + NADP(+) = 1-deoxy-D-xylulose 5-phosphate + NADPH + H(+). It participates in isoprenoid biosynthesis; isopentenyl diphosphate biosynthesis via DXP pathway; isopentenyl diphosphate from 1-deoxy-D-xylulose 5-phosphate: step 1/6. In terms of biological role, catalyzes the NADPH-dependent rearrangement and reduction of 1-deoxy-D-xylulose-5-phosphate (DXP) to 2-C-methyl-D-erythritol 4-phosphate (MEP). In Shewanella baltica (strain OS223), this protein is 1-deoxy-D-xylulose 5-phosphate reductoisomerase.